The primary structure comprises 66 residues: Large ribosomal subunit protein bL28 (66 aa).

The disordered stretch occupies residues 1–26; sequence MAKDAITGARTRFGNQRSHALNSSRR. The span at 13–25 shows a compositional bias: polar residues; the sequence is FGNQRSHALNSSR.

Belongs to the bacterial ribosomal protein bL28 family.

The protein is Large ribosomal subunit protein bL28 of Leuconostoc mesenteroides subsp. mesenteroides (strain ATCC 8293 / DSM 20343 / BCRC 11652 / CCM 1803 / JCM 6124 / NCDO 523 / NBRC 100496 / NCIMB 8023 / NCTC 12954 / NRRL B-1118 / 37Y).